The chain runs to 146 residues: Hemoglobin subunit delta (146 aa).

The region spanning 2-146 (HLTGEEKSAV…VATALAHKYH (145 aa)) is the Globin domain. Serine 50 carries the post-translational modification Phosphoserine. Histidine 63 and histidine 92 together coordinate heme b.

This sequence belongs to the globin family. As to quaternary structure, heterotetramer of two delta chains and two alpha chains. In terms of tissue distribution, red blood cells.

In Leontocebus nigricollis (Black-mantled tamarin), this protein is Hemoglobin subunit delta (HBD).